The sequence spans 323 residues: Lipoyl synthase (323 aa).

Residues Cys61, Cys66, Cys72, Cys87, Cys91, Cys94, and Ser300 each contribute to the [4Fe-4S] cluster site. The Radical SAM core domain maps to Trp73–Leu289.

Belongs to the radical SAM superfamily. Lipoyl synthase family. It depends on [4Fe-4S] cluster as a cofactor.

It is found in the cytoplasm. It carries out the reaction [[Fe-S] cluster scaffold protein carrying a second [4Fe-4S](2+) cluster] + N(6)-octanoyl-L-lysyl-[protein] + 2 oxidized [2Fe-2S]-[ferredoxin] + 2 S-adenosyl-L-methionine + 4 H(+) = [[Fe-S] cluster scaffold protein] + N(6)-[(R)-dihydrolipoyl]-L-lysyl-[protein] + 4 Fe(3+) + 2 hydrogen sulfide + 2 5'-deoxyadenosine + 2 L-methionine + 2 reduced [2Fe-2S]-[ferredoxin]. It functions in the pathway protein modification; protein lipoylation via endogenous pathway; protein N(6)-(lipoyl)lysine from octanoyl-[acyl-carrier-protein]: step 2/2. In terms of biological role, catalyzes the radical-mediated insertion of two sulfur atoms into the C-6 and C-8 positions of the octanoyl moiety bound to the lipoyl domains of lipoate-dependent enzymes, thereby converting the octanoylated domains into lipoylated derivatives. This Rhizobium etli (strain CIAT 652) protein is Lipoyl synthase.